The following is a 530-amino-acid chain: Potassium voltage-gated channel subfamily A member 6 (530 aa).

Positions 1 to 35 (MRSEKSLTLAAPGEVRGPEGEQQDAGEFQEAEGGG) are disordered. Serine 3 carries the phosphoserine modification. Positions 21 to 30 (EQQDAGEFQE) are enriched in acidic residues. The helical transmembrane segment at 172-193 (PARGIAIVSVLVILISIVIFCL) threads the bilayer. Residues 203–239 (GRGGSNEGSGTRMSPASRGSHEEEDEDEDSYAFPGSI) are disordered. Position 222 is a phosphoserine; by CK2 (serine 222). The helical transmembrane segment at 264–285 (FFLVETLCIVWFTFELLVRFSA) threads the bilayer. The S-palmitoyl cysteine moiety is linked to residue cysteine 286. A helical transmembrane segment spans residues 297–317 (MNIIDLVAIFPYFITLGTELV). The chain crosses the membrane as a helical; Voltage-sensor span at residues 339–359 (LAILRVIRLVRVFRIFKLSRH). The S4-S5 linker stretch occupies residues 361–374 (KGLQILGKTLQASM). Residues 375–396 (RELGLLIFFLFIGVILFSSAVY) form a helical membrane-spanning segment. The helical intramembrane region spans 411 to 422 (PDAFWWAVVTMT). Residues 423–428 (TVGYGD) carry the Selectivity filter motif. Residues 423-430 (TVGYGDMY) lie within the membrane without spanning it. The helical transmembrane segment at 438 to 466 (IVGSLCAIAGVLTIALPVPVIVSNFNYFY) threads the bilayer. Serine 512 bears the Phosphoserine; by PKA mark. The PDZ-binding signature appears at 527-529 (LTE). Position 528 is a phosphothreonine; by PKA (threonine 528).

It belongs to the potassium channel family. A (Shaker) (TC 1.A.1.2) subfamily. Kv1.6/KCNA6 sub-subfamily. In terms of assembly, homotetramer and heterotetramer of potassium channel proteins. Interacts with KCNAB1 and KCNAB2.

Its subcellular location is the cell membrane. The enzyme catalyses K(+)(in) = K(+)(out). Its function is as follows. Voltage-gated potassium channel that mediates transmembrane potassium transport in excitable membranes. Forms tetrameric potassium-selective channels through which potassium ions pass in accordance with their electrochemical gradient. The channel alternates between opened and closed conformations in response to the voltage difference across the membrane. Can form functional homotetrameric channels and heterotetrameric channels that contain variable proportions of KCNA1, KCNA2, KCNA4, KNCA5, KCNA6, and possibly other family members as well; channel properties depend on the type of alpha subunits that are part of the channel. Channel properties are modulated by cytoplasmic beta subunits that regulate the subcellular location of the alpha subunits and promote rapid inactivation. Homotetrameric channels display rapid activation and slow inactivation. This Rattus norvegicus (Rat) protein is Potassium voltage-gated channel subfamily A member 6 (Kcna6).